The primary structure comprises 179 residues: SCAN domain-containing protein 1 (179 aa).

The interval 1–107 is disordered; that stretch reads MAATEPILAT…AGSRLGPETF (107 aa). A compositionally biased stretch (low complexity) spans 52 to 80; that stretch reads SPNAAVPEAIPTPRAAASAALELPLGPAP. Residues 108–166 form the SCAN box domain; that stretch reads RQRFRQFRYQDAAGPREAFRQLRELSRQWLRPDIRTKEQIVEMLVQEQLLAILPEAARA.

As to quaternary structure, interacts with ZNF202.

The protein resides in the nucleus. Functionally, may regulate transcriptional activity. The sequence is that of SCAN domain-containing protein 1 (SCAND1) from Pan paniscus (Pygmy chimpanzee).